Consider the following 618-residue polypeptide: Phostensin (618 aa).

Over residues 15–33 the composition is skewed to basic and acidic residues; that stretch reads RRQEEAAVRGREKAERERL. Positions 15–505 are disordered; it reads RRQEEAAVRG…PATADAAVPG (491 aa). Residue S54 is modified to Phosphoserine. Residues 96–109 show a composition bias toward low complexity; it reads QQQQQQQQQQQQQQ. 2 stretches are compositionally biased toward basic and acidic residues: residues 110 to 160 and 173 to 197; these read RSEE…ERRL and LESR…EVRK. S131, S139, S181, and S201 each carry phosphoserine. T205 carries the phosphothreonine modification. Position 231 is a phosphoserine (S231). Basic and acidic residues-rich tracts occupy residues 234 to 245 and 271 to 289; these read DSDHEKLGLTDA and SGEE…EERT. The segment covering 308–319 has biased composition (low complexity); that stretch reads EAAGSSSGGVEA. Positions 348 to 358 are enriched in basic and acidic residues; the sequence is KVRDRTPRDTE. Pro residues predominate over residues 429 to 451; it reads RPPPAAPLSPPPPAPPAPQPPGD. S437 bears the Phosphoserine mark. K462 is modified (N6-acetyllysine). Residues 485-505 show a composition bias toward low complexity; sequence APPAAAATPATPATADAAVPG. S535 is modified (phosphoserine). The segment at 556 to 594 is disordered; the sequence is YQYPSESSVLEELGPEPEAPSAPSPPAAQPDDEEDEEEL. A compositionally biased stretch (pro residues) spans 572 to 583; it reads PEAPSAPSPPAA. A compositionally biased stretch (acidic residues) spans 585-594; sequence PDDEEDEEEL.

Interacts with Protein phosphatase 1 (PP1).

The protein resides in the cytoplasm. Its subcellular location is the cytoskeleton. Functionally, may target protein phosphatase 1 to F-actin cytoskeleton. This Sus scrofa (Pig) protein is Phostensin (PPP1R18).